We begin with the raw amino-acid sequence, 499 residues long: Ethanolamine-phosphate phospho-lyase (499 aa).

Lysine 278 carries the post-translational modification N6-(pyridoxal phosphate)lysine.

This sequence belongs to the class-III pyridoxal-phosphate-dependent aminotransferase family. As to quaternary structure, homotetramer. It depends on pyridoxal 5'-phosphate as a cofactor.

The protein localises to the mitochondrion. The catalysed reaction is phosphoethanolamine + H2O = acetaldehyde + NH4(+) + phosphate. Its function is as follows. Catalyzes the pyridoxal-phosphate-dependent breakdown of phosphoethanolamine, converting it to ammonia, inorganic phosphate and acetaldehyde. This Mus musculus (Mouse) protein is Ethanolamine-phosphate phospho-lyase (Etnppl).